The following is a 691-amino-acid chain: DNA ligase (691 aa).

NAD(+) contacts are provided by residues 41–45 (DAEYD), 90–91 (SL), and Glu130. Catalysis depends on Lys132, which acts as the N6-AMP-lysine intermediate. NAD(+)-binding residues include Arg153, Glu190, Lys307, and Lys331. 4 residues coordinate Zn(2+): Cys425, Cys428, Cys443, and Cys449. Positions 610–691 (APQGVLAGKT…LHQLLEGNTR (82 aa)) constitute a BRCT domain.

This sequence belongs to the NAD-dependent DNA ligase family. LigA subfamily. The cofactor is Mg(2+). Mn(2+) is required as a cofactor.

It catalyses the reaction NAD(+) + (deoxyribonucleotide)n-3'-hydroxyl + 5'-phospho-(deoxyribonucleotide)m = (deoxyribonucleotide)n+m + AMP + beta-nicotinamide D-nucleotide.. Functionally, DNA ligase that catalyzes the formation of phosphodiester linkages between 5'-phosphoryl and 3'-hydroxyl groups in double-stranded DNA using NAD as a coenzyme and as the energy source for the reaction. It is essential for DNA replication and repair of damaged DNA. This chain is DNA ligase, found in Burkholderia multivorans (strain ATCC 17616 / 249).